A 633-amino-acid chain; its full sequence is 1-deoxy-D-xylulose-5-phosphate synthase (633 aa).

Polar residues predominate over residues 1-12; it reads MSEPTANLQPAS. The tract at residues 1–21 is disordered; the sequence is MSEPTANLQPASRTPLLDRVN. Thiamine diphosphate is bound by residues H86 and 127 to 129; that span reads GHA. D158 contacts Mg(2+). Residues 159 to 160, N187, and E377 each bind thiamine diphosphate; that span reads GS. Position 187 (N187) interacts with Mg(2+).

This sequence belongs to the transketolase family. DXPS subfamily. In terms of assembly, homodimer. It depends on Mg(2+) as a cofactor. Requires thiamine diphosphate as cofactor.

The catalysed reaction is D-glyceraldehyde 3-phosphate + pyruvate + H(+) = 1-deoxy-D-xylulose 5-phosphate + CO2. It functions in the pathway metabolic intermediate biosynthesis; 1-deoxy-D-xylulose 5-phosphate biosynthesis; 1-deoxy-D-xylulose 5-phosphate from D-glyceraldehyde 3-phosphate and pyruvate: step 1/1. Its function is as follows. Catalyzes the acyloin condensation reaction between C atoms 2 and 3 of pyruvate and glyceraldehyde 3-phosphate to yield 1-deoxy-D-xylulose-5-phosphate (DXP). The protein is 1-deoxy-D-xylulose-5-phosphate synthase of Deinococcus geothermalis (strain DSM 11300 / CIP 105573 / AG-3a).